The chain runs to 737 residues: MNGDSRAAVVTSPPPTTAPHKERYFDRVDENNPEYLRERNMAPDLRQDFNMMEQKKRVSMILQSPAFCEELESMIQEQFKKGKNPTGLLALQQIADFMTTNVPNVYPAAPQGGMAALNMSLGMVTPVNDLRGSDSIAYDKGEKLLRCKLAAFYRLADLFGWSQLIYNHITTRVNSEQEHFLIVPFGLLYSEVTASSLVKINLQGDIVDRGSTNLGVNQAGFTLHSAIYAARPDVKCVVHIHTPAGAAVSAMKCGLLPISPEALSLGEVAYHDYHGILVDEEEKVLIQKNLGPKSKVLILRNHGLVSVGESVEEAFYYIHNLVVACEIQARTLASAGGPDNLVLLNPEKYKAKSRSPGSPVGEGTGSPPKWQIGEQEFEALMRMLDNLGYRTGYPYRYPALREKSKKYSDVEVPASVTGYSFTSDGDSGTCSPLRHSFQKQQREKTRWLNSGRGDEASEEGQNGSSPKSKTKWTKEDGHRTSTSAVPNLFVPLNTNPKEVQEMRNKIREQNLQDIKTAGPQSQVLCGVVMDRSLVQGELVTASKAIIEKEYQPHVIVSTTGPNPFTTLTDRELEEYRREVERKQKGSEENLDEAREQKEKSPPDQPAVPYPPPSTPIKLEEDLVPEPTTGDDSDAATFKPTLPDLSPDEPSEALGFPMLEKEEEAHRPPSPTEAPTEASPEPAPDPAPVAEEAAPSAAEEGAAADPGSDGSPGKSPSKKKKKFRTPSFLKKSKKKSES.

At Met-1 the chain carries N-acetylmethionine. Residues Met-1–Lys-21 form a disordered region. Phosphoserine is present on Ser-12. Ser-59 carries the phosphoserine; by PKA modification. A Phosphoserine modification is found at Ser-64. At Thr-331 the chain carries Phosphothreonine. Ser-334, Ser-353, Ser-355, Ser-358, and Ser-366 each carry phosphoserine. Ser-408 bears the Phosphoserine; by PKA mark. The span at Tyr-419 to Cys-430 shows a compositional bias: polar residues. Disordered stretches follow at residues Tyr-419–Val-490 and Arg-576–Ser-737. At Ser-427 the chain carries Phosphoserine. Thr-429 is modified (phosphothreonine). Ser-431 carries the post-translational modification Phosphoserine. Residue Ser-436 is modified to Phosphoserine; by PKA. Thr-445 carries the post-translational modification Phosphothreonine; by ROCK2. Residues Ser-464 and Ser-465 each carry the phosphoserine modification. Thr-480 is modified (phosphothreonine; by ROCK2). Residue Ser-481 is modified to Phosphoserine; by PKA. Basic and acidic residues predominate over residues Arg-576–Pro-601. Residues Ser-586, Ser-600, and Ser-613 each carry the phosphoserine modification. Residues Pro-602–Thr-614 are compositionally biased toward pro residues. Thr-614 is subject to Phosphothreonine. 4 positions are modified to phosphoserine: Ser-678, Ser-707, Ser-710, and Ser-714. Over residues Pro-687–Ser-714 the composition is skewed to low complexity. Positions Pro-715–Ser-737 are enriched in basic residues. The residue at position 716 (Ser-716) is a Phosphoserine; by PKC. Residues Lys-717–Lys-734 form an interaction with calmodulin region. Phosphoserine; by PKA and PKC is present on Ser-726.

Belongs to the aldolase class II family. Adducin subfamily. In terms of assembly, heterodimer of an alpha and a beta subunit or an alpha and a gamma subunit.

It localises to the cytoplasm. It is found in the cytoskeleton. The protein localises to the cell membrane. Functionally, membrane-cytoskeleton-associated protein that promotes the assembly of the spectrin-actin network. Binds to calmodulin. The chain is Alpha-adducin (ADD1) from Pongo abelii (Sumatran orangutan).